The primary structure comprises 601 residues: Elongation factor 4 (601 aa).

Residues Glu5–Glu187 form the tr-type G domain. GTP is bound by residues Asp17–Thr22 and Asn134–Asp137.

It belongs to the TRAFAC class translation factor GTPase superfamily. Classic translation factor GTPase family. LepA subfamily.

The protein resides in the cell inner membrane. The catalysed reaction is GTP + H2O = GDP + phosphate + H(+). Functionally, required for accurate and efficient protein synthesis under certain stress conditions. May act as a fidelity factor of the translation reaction, by catalyzing a one-codon backward translocation of tRNAs on improperly translocated ribosomes. Back-translocation proceeds from a post-translocation (POST) complex to a pre-translocation (PRE) complex, thus giving elongation factor G a second chance to translocate the tRNAs correctly. Binds to ribosomes in a GTP-dependent manner. The protein is Elongation factor 4 of Nitratidesulfovibrio vulgaris (strain ATCC 29579 / DSM 644 / CCUG 34227 / NCIMB 8303 / VKM B-1760 / Hildenborough) (Desulfovibrio vulgaris).